Reading from the N-terminus, the 927-residue chain is Tubulin monoglycylase TTLL3 (927 aa).

Residues arginine 35–serine 47 are compositionally biased toward polar residues. 2 disordered regions span residues arginine 35–valine 113 and histidine 194–glutamate 227. Residues aspartate 216–asparagine 226 show a composition bias toward acidic residues. In terms of domain architecture, TTL spans valine 345 to threonine 702. ATP-binding positions include lysine 476, arginine 482–glycine 483, glutamine 514–isoleucine 517, lysine 527–aspartate 529, and cysteine 571–asparagine 572. Residue arginine 482 participates in a protein binding. Mg(2+) is bound by residues aspartate 649, glutamate 662, and asparagine 664. An ATP-binding site is contributed by glutamate 662. Disordered regions lie at residues valine 735–glycine 799 and glutamate 897–threonine 927. Positions leucine 752–arginine 769 are enriched in polar residues. Basic and acidic residues predominate over residues alanine 776 to glutamate 788. Polar residues predominate over residues leucine 916–threonine 927.

Mg(2+) is required as a cofactor. Highly expressed in brain and testis. Expressed in heart, kidney, liver, lung, muscle, spleen, trachea and colon. Expressed in sperm flagellum. In the brain, specifically expressed in ependymal cilia.

Its subcellular location is the cytoplasm. The protein resides in the cytoskeleton. The protein localises to the cell projection. It localises to the cilium. It is found in the cilium axoneme. Its subcellular location is the flagellum axoneme. The enzyme catalyses L-glutamyl-[protein] + glycine + ATP = glycyl-L-glutamyl-[protein] + ADP + phosphate + H(+). In terms of biological role, monoglycylase which modifies alpha- and beta-tubulin, adding a single glycine on the gamma-carboxyl groups of specific glutamate residues to generate monoglycine side chains within the C-terminal tail of tubulin. Not involved in elongation step of the polyglycylation reaction. Preferentially glycylates a beta-tail peptide over the alpha-tail, although shifts its preference toward alpha-tail as beta-tail glutamylation increases. Competes with polyglutamylases for modification site on beta-tubulin substrate, thereby creating an anticorrelation between glycylation and glutamylation reactions. Together with TTLL8, mediates microtubule glycylation of primary and motile cilia, which is essential for their stability and maintenance. Involved in microtubule glycylation of primary cilia in colon which controls cell proliferation of epithelial cells and plays an essential role in colon cancer development. Together with TTLL8, glycylates sperm flagella which regulates axonemal dynein motor activity, thereby controlling flagellar beat, directional sperm swimming and male fertility. The polypeptide is Tubulin monoglycylase TTLL3 (Mus musculus (Mouse)).